The following is a 488-amino-acid chain: Glutamate synthase [NADPH] small chain (488 aa).

A 4Fe-4S ferredoxin-type domain is found at 38–69 (ESLRQQATRCMDCGIPFCHNGCPLGNLIPEWN).

Requires [4Fe-4S] cluster as cofactor.

It carries out the reaction 2 L-glutamate + NADP(+) = L-glutamine + 2-oxoglutarate + NADPH + H(+). Its pathway is amino-acid biosynthesis; L-glutamate biosynthesis via GLT pathway; L-glutamate from 2-oxoglutarate and L-glutamine (NADP(+) route): step 1/1. The sequence is that of Glutamate synthase [NADPH] small chain (gltD) from Mycobacterium tuberculosis (strain CDC 1551 / Oshkosh).